The chain runs to 365 residues: uncharacterized protein (365 aa).

At 1 to 133 (MVLAKQWVLK…RKLDKNKVGK (133 aa)) the chain is on the cytoplasmic side. Residues 134–154 (LWWYLSVLGGTSLTAYFIFFT) form a helical membrane-spanning segment. Residues 155 to 169 (YAQLQEREEDYGKVY) are Extracellular-facing. Residues 170 to 190 (LISGAAGAVGTVCIQLALNVF) form a helical membrane-spanning segment. The Cytoplasmic segment spans residues 191 to 365 (KASKVIAIAG…KLITKVNNEE (175 aa)).

It localises to the membrane. This is an uncharacterized protein from Saccharomyces cerevisiae (strain ATCC 204508 / S288c) (Baker's yeast).